The primary structure comprises 298 residues: Probable endonuclease 4 (298 aa).

Zn(2+) contacts are provided by histidine 69, histidine 111, glutamate 146, aspartate 180, histidine 183, histidine 215, aspartate 228, histidine 230, and glutamate 260.

This sequence belongs to the AP endonuclease 2 family. Requires Zn(2+) as cofactor.

It carries out the reaction Endonucleolytic cleavage to 5'-phosphooligonucleotide end-products.. Its function is as follows. Endonuclease IV plays a role in DNA repair. It cleaves phosphodiester bonds at apurinic or apyrimidinic (AP) sites, generating a 3'-hydroxyl group and a 5'-terminal sugar phosphate. This Bacillus cereus (strain B4264) protein is Probable endonuclease 4.